The primary structure comprises 1103 residues: Voltage-dependent calcium channel subunit alpha-2/delta-1 (1103 aa).

The first 24 residues, Met-1 to Glu-24, serve as a signal peptide directing secretion. At Glu-25–Gly-1073 the chain is on the extracellular side. Asn-92 carries an N-linked (GlcNAc...) asparagine glycan. Position 119 is a phosphoserine (Ser-119). Residues Asn-136 and Asn-184 are each glycosylated (N-linked (GlcNAc...) asparagine). Residues Asp-253–Leu-430 enclose the VWFA domain. Residues Asp-259, Ser-261, and Ser-263 each contribute to the a divalent metal cation site. The short motif at Asp-259 to Ser-263 is the MIDAS-like motif element. 2 N-linked (GlcNAc...) asparagine glycosylation sites follow: Asn-324 and Asn-348. Cysteines 404 and 1059 form a disulfide. The Cache domain maps to Trp-446–Pro-537. N-linked (GlcNAc...) asparagine glycosylation is found at Asn-613, Asn-781, and Asn-888. Residues Val-1074–Leu-1094 traverse the membrane as a helical segment. Topologically, residues Val-1095 to Leu-1103 are cytoplasmic.

The protein belongs to the calcium channel subunit alpha-2/delta family. In terms of assembly, dimer formed of alpha-2-1 and delta-1 chains; disulfide-linked. Voltage-dependent calcium channels are multisubunit complexes, consisting of alpha-1 (CACNA1), alpha-2 (CACNA2D), beta (CACNB) and delta (CACNA2D) subunits in a 1:1:1:1 ratio. Post-translationally, proteolytically processed into subunits alpha-2-1 and delta-1 that are disulfide-linked. As to expression, isoform 2A is expressed in skeletal muscle and aorta. Isoform 2B is expressed in brain. Isoform 2C is expressed in heart. Isoform 2D is expressed in heart and smooth muscle. Isoform 2E is expressed in smooth muscle. All five isoforms are expressed in the cardiovascular system.

It is found in the membrane. The protein resides in the cell membrane. In terms of biological role, the alpha-2/delta subunit of voltage-dependent calcium channels regulates calcium current density and activation/inactivation kinetics of the calcium channel. Plays an important role in excitation-contraction coupling. The protein is Voltage-dependent calcium channel subunit alpha-2/delta-1 (Cacna2d1) of Mus musculus (Mouse).